Here is a 282-residue protein sequence, read N- to C-terminus: Probable methylxanthine N7-demethylase NdmC (282 aa).

It catalyses the reaction 7-methylxanthine + NADPH + O2 + H(+) = xanthine + formaldehyde + NADP(+) + H2O. The enzyme catalyses 7-methylxanthine + NADH + O2 + H(+) = xanthine + formaldehyde + NAD(+) + H2O. Involved in the caffeine degradation, which is the essential first step for assimilating the carbon and nitrogen in caffeine. Probably catalyzes the N7-demethylation of 7-methylxanthine to produce xanthine and formaldehyde. This is Probable methylxanthine N7-demethylase NdmC from Pseudomonas sp. (strain TJI-51).